Consider the following 158-residue polypeptide: Protein OPG060 (158 aa).

The protein belongs to the orthopoxvirus OPG058 family.

The chain is Protein OPG060 (OPG060) from Homo sapiens (Human).